The sequence spans 505 residues: ATP synthase subunit alpha (505 aa).

169 to 176 (GDRQTGKT) lines the ATP pocket.

Belongs to the ATPase alpha/beta chains family. In terms of assembly, F-type ATPases have 2 components, CF(1) - the catalytic core - and CF(0) - the membrane proton channel. CF(1) has five subunits: alpha(3), beta(3), gamma(1), delta(1), epsilon(1). CF(0) has three main subunits: a(1), b(2) and c(9-12). The alpha and beta chains form an alternating ring which encloses part of the gamma chain. CF(1) is attached to CF(0) by a central stalk formed by the gamma and epsilon chains, while a peripheral stalk is formed by the delta and b chains.

The protein resides in the cell membrane. The enzyme catalyses ATP + H2O + 4 H(+)(in) = ADP + phosphate + 5 H(+)(out). Functionally, produces ATP from ADP in the presence of a proton gradient across the membrane. The alpha chain is a regulatory subunit. The protein is ATP synthase subunit alpha of Alkaliphilus oremlandii (strain OhILAs) (Clostridium oremlandii (strain OhILAs)).